Reading from the N-terminus, the 153-residue chain is Peritrophin-1 (153 aa).

The N-terminal stretch at M1–A17 is a signal peptide. 2 consecutive Chitin-binding type-2 domains span residues D18 to P79 and S92 to E153. 2 cysteine pairs are disulfide-bonded: C56–C69 and C130–C143. N63 carries an N-linked (GlcNAc...) asparagine glycan.

Glycosylated. Adult peritrophic membrane.

Its function is as follows. Binds chitin but not cellulose. May be involved in the spatial organization of PM. The protein is Peritrophin-1 (Aper1) of Anopheles gambiae (African malaria mosquito).